We begin with the raw amino-acid sequence, 343 residues long: Tetraacyldisaccharide 4'-kinase (343 aa).

ATP is bound at residue 47 to 54 (SVGGTGKT).

This sequence belongs to the LpxK family.

It carries out the reaction a lipid A disaccharide + ATP = a lipid IVA + ADP + H(+). It participates in glycolipid biosynthesis; lipid IV(A) biosynthesis; lipid IV(A) from (3R)-3-hydroxytetradecanoyl-[acyl-carrier-protein] and UDP-N-acetyl-alpha-D-glucosamine: step 6/6. Transfers the gamma-phosphate of ATP to the 4'-position of a tetraacyldisaccharide 1-phosphate intermediate (termed DS-1-P) to form tetraacyldisaccharide 1,4'-bis-phosphate (lipid IVA). In Flavobacterium psychrophilum (strain ATCC 49511 / DSM 21280 / CIP 103535 / JIP02/86), this protein is Tetraacyldisaccharide 4'-kinase.